Reading from the N-terminus, the 42-residue chain is Proline-rich antimicrobial peptide 2 (42 aa).

As to expression, hemolymph.

It is found in the secreted. Its function is as follows. Antimicrobial protein. Has antibacterial activity against the Gram-positive bacterium M.luteus (MIC=8.6 uM). Lacks antibacterial activity against the Gram-positive bacteria B.circulans, L.monocytogenes, S.aureus, and S.lutea, and the Gram-negative bacteria E.coli D31, E.coli ATCC 25922, and S.typhimurium. Lacks antifungal activity against S.cerevisiae, P.pastoris, Z.marxianus, C.albicans, C.fructus, C.wickerhamii, A.niger, F.oxysporum, and T.harizianum. The sequence is that of Proline-rich antimicrobial peptide 2 from Galleria mellonella (Greater wax moth).